Consider the following 436-residue polypeptide: UPF0597 protein YhaM (436 aa).

This sequence belongs to the UPF0597 family.

This Escherichia coli O139:H28 (strain E24377A / ETEC) protein is UPF0597 protein YhaM.